A 371-amino-acid chain; its full sequence is Ribosomal RNA small subunit methyltransferase H (371 aa).

Residues 92–94, Asp111, Tyr138, Asp159, and Gln166 each bind S-adenosyl-L-methionine; that span reads GGH.

Belongs to the methyltransferase superfamily. RsmH family.

It localises to the cytoplasm. It carries out the reaction cytidine(1402) in 16S rRNA + S-adenosyl-L-methionine = N(4)-methylcytidine(1402) in 16S rRNA + S-adenosyl-L-homocysteine + H(+). Specifically methylates the N4 position of cytidine in position 1402 (C1402) of 16S rRNA. The protein is Ribosomal RNA small subunit methyltransferase H of Mycolicibacterium gilvum (strain PYR-GCK) (Mycobacterium gilvum (strain PYR-GCK)).